The primary structure comprises 90 residues: DNA-binding protein HU (90 aa).

The tract at residues 57–90 (ARKGVNPQTRKPITIPERKVPKFKPGKALKEKVK) is disordered.

It belongs to the bacterial histone-like protein family.

Its function is as follows. Histone-like DNA-binding protein which is capable of wrapping DNA to stabilize it, and thus to prevent its denaturation under extreme environmental conditions. The sequence is that of DNA-binding protein HU (hup) from Thermotoga maritima (strain ATCC 43589 / DSM 3109 / JCM 10099 / NBRC 100826 / MSB8).